The chain runs to 323 residues: Viral cathepsin (323 aa).

An N-terminal signal peptide occupies residues 1-16; sequence MNKILFYLFVYAVVKS. Positions 17–112 are cleaved as a propeptide — activation peptide; that stretch reads AAYDPLKAPN…ILLDQPPGKG (96 aa). 3 cysteine pairs are disulfide-bonded: cysteine 133–cysteine 174, cysteine 167–cysteine 207, and cysteine 262–cysteine 310. Cysteine 136 is a catalytic residue. A glycan (N-linked (GlcNAc...) asparagine; by host) is linked at asparagine 158. Catalysis depends on residues histidine 269 and asparagine 289.

Belongs to the peptidase C1 family. In terms of processing, synthesized as an inactive proenzyme and activated by proteolytic removal of the inhibitory propeptide.

It carries out the reaction Endopeptidase of broad specificity, hydrolyzing substrates of both cathepsin L and cathepsin B.. Functionally, cysteine protease that plays an essential role in host liquefaction to facilitate horizontal transmission of the virus. May participate in the degradation of foreign protein expressed by the baculovirus system. The protein is Viral cathepsin (VCATH) of Bombyx mori (Silk moth).